We begin with the raw amino-acid sequence, 216 residues long: Homologous-pairing protein 2 (216 aa).

The protein belongs to the HOP2 family. In terms of assembly, interacts with mcp7.

It localises to the nucleus. Required for proper homologous pairing and efficient cross-over and intragenic recombination during meiosis. Acts indirectly in a process facilitating homologous recombination. Acts during mid- to late-horse-tail period. The chain is Homologous-pairing protein 2 (meu13) from Schizosaccharomyces pombe (strain 972 / ATCC 24843) (Fission yeast).